The following is a 266-amino-acid chain: NADP-dependent mannitol dehydrogenase (266 aa).

NADP(+) is bound by residues Thr31, Ile33, Asn107, and Arg140. Ser159 acts as the Proton donor in catalysis. Residues Tyr174, Lys178, Ile206, and Thr208 each coordinate NADP(+). Tyr174 acts as the Proton acceptor in catalysis. Lys178 serves as the catalytic Lowers pKa of active site Tyr.

Belongs to the short-chain dehydrogenases/reductases (SDR) family. Homotetramer.

It localises to the vacuole. It carries out the reaction D-mannitol + NADP(+) = D-fructose + NADPH + H(+). The protein is NADP-dependent mannitol dehydrogenase of Alternaria alternata (Alternaria rot fungus).